The sequence spans 443 residues: Endothelin receptor type B (443 aa).

A signal peptide spans 1 to 26; the sequence is MQPLPTLCGRVLVALILACGVAGVQG. The Extracellular segment spans residues 27 to 102; that stretch reads EERRFPPARA…RTIEIKETFK (76 aa). Positions 51–62 are enriched in polar residues; it reads TKTSWPTGSNAS. Positions 51-89 are disordered; it reads TKTSWPTGSNASVPRLSAPPQMPKAGRTAGAQRRTLPPP. A glycan (N-linked (GlcNAc...) asparagine) is linked at asparagine 60. A helical transmembrane segment spans residues 103–127; it reads YINTVVSCLVFVLGIIGNSTLLRII. The Cytoplasmic segment spans residues 128-138; the sequence is YKNKCMRNGPN. Residues 139–164 form a helical membrane-spanning segment; sequence ILIASLALGDLLHIIIDIPINVYKLL. The Extracellular portion of the chain corresponds to 165–176; sequence AEDWPFGVEMCK. A disulfide bridge links cysteine 175 with cysteine 256. A helical transmembrane segment spans residues 177–198; sequence LVPFIQKASVGITVLSLCALSI. The Cytoplasmic portion of the chain corresponds to 199-219; that stretch reads DRYRAVASWSRIKGIGVPKWT. A helical transmembrane segment spans residues 220–244; the sequence is AVEIVLIWVVSVVLAVPEAVGFDMI. The Extracellular portion of the chain corresponds to 245–272; the sequence is TADYKGSYLRICLLHPTQKTAFMQFYKN. Residues 273–297 form a helical membrane-spanning segment; it reads AKDWWLFSFYFCLPLAITAFFYTLE. Residues 298 to 325 are Cytoplasmic-facing; sequence TCEMLRKKSGMQIALNDHLKQRREVAKT. Position 306 is a phosphoserine (serine 306). A helical transmembrane segment spans residues 326 to 351; the sequence is VFCLVLVFALCWLPLHLSRILKHTLY. Residues 352-363 lie on the Extracellular side of the membrane; it reads DQNDPHRCELLS. A helical transmembrane segment spans residues 364–390; sequence FLLVLEYIGINMASLNSCINPIALYLV. The Cytoplasmic portion of the chain corresponds to 391–443; it reads SKRFKNCFKWCLCCWCQSFEEKQSLEDKQSCLKFKANDHGYDNFRSSNKYSSS. S-palmitoyl cysteine attachment occurs at residues cysteine 403, cysteine 404, and cysteine 406. Serine 420 bears the Phosphoserine mark. Tyrosine 440 carries the post-translational modification Phosphotyrosine. Residues serine 441, serine 442, and serine 443 each carry the phosphoserine modification.

It belongs to the G-protein coupled receptor 1 family. Endothelin receptor subfamily. EDNRB sub-subfamily.

It localises to the cell membrane. In terms of biological role, non-specific receptor for endothelin 1, 2, and 3. Mediates its action by association with G proteins that activate a phosphatidylinositol-calcium second messenger system. This is Endothelin receptor type B (EDNRB) from Equus caballus (Horse).